We begin with the raw amino-acid sequence, 344 residues long: N-acetyl-gamma-glutamyl-phosphate reductase (344 aa).

Residue C148 is part of the active site.

It belongs to the NAGSA dehydrogenase family. Type 1 subfamily.

Its subcellular location is the cytoplasm. It catalyses the reaction N-acetyl-L-glutamate 5-semialdehyde + phosphate + NADP(+) = N-acetyl-L-glutamyl 5-phosphate + NADPH + H(+). It participates in amino-acid biosynthesis; L-arginine biosynthesis; N(2)-acetyl-L-ornithine from L-glutamate: step 3/4. Functionally, catalyzes the NADPH-dependent reduction of N-acetyl-5-glutamyl phosphate to yield N-acetyl-L-glutamate 5-semialdehyde. The polypeptide is N-acetyl-gamma-glutamyl-phosphate reductase (Geobacillus kaustophilus (strain HTA426)).